We begin with the raw amino-acid sequence, 211 residues long: MTVIAVIDYDMGNLHSACKGLENAGAQTVVSDRPEDLFAADAVVLPGVGAFDPAMQHLRSRQLVPVIHDLIASGKPFLGICLGLQILFEHSEEGQEPGLGILAGTVKRFDPEPGLTIPHMGWNQLDLTQPGLPLWQQLELRPWLYFVHSYYVEPADLEVQAATITHGSQTVTAAIARNNLVAVQFHPEKSADAGLQILANFVSQIKAPVLV.

In terms of domain architecture, Glutamine amidotransferase type-1 spans 3 to 211 (VIAVIDYDMG…VSQIKAPVLV (209 aa)). Cys-81 functions as the Nucleophile in the catalytic mechanism. Active-site residues include His-186 and Glu-188.

In terms of assembly, heterodimer of HisH and HisF.

The protein localises to the cytoplasm. It catalyses the reaction 5-[(5-phospho-1-deoxy-D-ribulos-1-ylimino)methylamino]-1-(5-phospho-beta-D-ribosyl)imidazole-4-carboxamide + L-glutamine = D-erythro-1-(imidazol-4-yl)glycerol 3-phosphate + 5-amino-1-(5-phospho-beta-D-ribosyl)imidazole-4-carboxamide + L-glutamate + H(+). The enzyme catalyses L-glutamine + H2O = L-glutamate + NH4(+). The protein operates within amino-acid biosynthesis; L-histidine biosynthesis; L-histidine from 5-phospho-alpha-D-ribose 1-diphosphate: step 5/9. In terms of biological role, IGPS catalyzes the conversion of PRFAR and glutamine to IGP, AICAR and glutamate. The HisH subunit catalyzes the hydrolysis of glutamine to glutamate and ammonia as part of the synthesis of IGP and AICAR. The resulting ammonia molecule is channeled to the active site of HisF. This chain is Imidazole glycerol phosphate synthase subunit HisH, found in Cyanothece sp. (strain PCC 7425 / ATCC 29141).